Here is a 154-residue protein sequence, read N- to C-terminus: Endoribonuclease YbeY (154 aa).

His-113, His-117, and His-123 together coordinate Zn(2+).

This sequence belongs to the endoribonuclease YbeY family. It depends on Zn(2+) as a cofactor.

It is found in the cytoplasm. Its function is as follows. Single strand-specific metallo-endoribonuclease involved in late-stage 70S ribosome quality control and in maturation of the 3' terminus of the 16S rRNA. This Verminephrobacter eiseniae (strain EF01-2) protein is Endoribonuclease YbeY.